Consider the following 231-residue polypeptide: Small ribosomal subunit protein uS3 (231 aa).

Positions isoleucine 39–arginine 107 constitute a KH type-2 domain.

It belongs to the universal ribosomal protein uS3 family. Part of the 30S ribosomal subunit. Forms a tight complex with proteins S10 and S14.

Its function is as follows. Binds the lower part of the 30S subunit head. Binds mRNA in the 70S ribosome, positioning it for translation. The chain is Small ribosomal subunit protein uS3 from Zymomonas mobilis subsp. mobilis (strain ATCC 31821 / ZM4 / CP4).